The following is a 718-amino-acid chain: Origin of replication complex subunit 3 (718 aa).

The segment covering 26-43 (GAAASSSSSSAPSLPSSG) has biased composition (low complexity). The tract at residues 26–75 (GAAASSSSSSAPSLPSSGRARRRIDVSGLASPNPKPGKRSRDDDAAEDDD) is disordered. The short motif at 659–666 (IKRKPHTS) is the Nuclear localization signal element.

The protein belongs to the ORC3 family. Component of the origin recognition complex (ORC) composed of at least ORC1, ORC2, ORC3, ORC4, ORC5 and ORC6. ORC is regulated in a cell-cycle and development dependent manner. It is sequentially assembled at the exit from anaphase of mitosis and disassembled as cells enter S phase. Expressed at low levels in the shoot apical meristem (SAM), leaves, ears and roots (including root tips).

The protein localises to the nucleus. Component of the origin recognition complex (ORC) that binds origins of replication. DNA-binding is ATP-dependent. The specific DNA sequences that define origins of replication have not been identified yet. The sequence is that of Origin of replication complex subunit 3 from Oryza sativa subsp. japonica (Rice).